Reading from the N-terminus, the 406-residue chain is S-adenosylmethionine synthase (406 aa).

Position 5 (H5) interacts with ATP. D7 provides a ligand contact to Mg(2+). E33 lines the K(+) pocket. Residues E46 and Q89 each coordinate L-methionine. Residues 89 to 99 form a flexible loop region; the sequence is QSPDIAQGVDT. ATP is bound by residues 164–166, 240–241, D249, 255–256, A272, and K276; these read DGK, KF, and RK. D249 is an L-methionine binding site. K280 is an L-methionine binding site.

The protein belongs to the AdoMet synthase family. In terms of assembly, homotetramer; dimer of dimers. Mg(2+) serves as cofactor. It depends on K(+) as a cofactor.

The protein resides in the cytoplasm. It carries out the reaction L-methionine + ATP + H2O = S-adenosyl-L-methionine + phosphate + diphosphate. The protein operates within amino-acid biosynthesis; S-adenosyl-L-methionine biosynthesis; S-adenosyl-L-methionine from L-methionine: step 1/1. Catalyzes the formation of S-adenosylmethionine (AdoMet) from methionine and ATP. The overall synthetic reaction is composed of two sequential steps, AdoMet formation and the subsequent tripolyphosphate hydrolysis which occurs prior to release of AdoMet from the enzyme. The polypeptide is S-adenosylmethionine synthase (Synechococcus sp. (strain ATCC 27144 / PCC 6301 / SAUG 1402/1) (Anacystis nidulans)).